Consider the following 356-residue polypeptide: MCPPVSVRHGARGMSCLYGAWLYQLVHGEQMKMCFACFKAAFLLNKFYLEMGYWEQEELSEEEEEEEVWDAEPMEHLSESESLESDSKQDAGSEQDAGSEPNTRSEQDAWQGVGSLYVPQSVSEYGGPGALVPTPSWTQWVVFSISVPTELLPQEAVPLDLGPEDVEWTQALPWRLDVLFPCSHRLIPPLSWWDILDVMPSLGQPVLLELRSLWPLDQSVAQTWLQDQKFVLLLDSIHFMCHLLSMHVCWAVRTQVQHWQVLLNPGEMWVAHLKRVLFRPRGLYPWSLSILKSSDLGMELVPAAFYLRKKGFWVGSFLPWNSSIPETWSWDPGERLFITDATICATNYHFARSFFP.

Residues 1–78 (MCPPVSVRHG…WDAEPMEHLS (78 aa)) form an interaction with LIRE1 region. The segment covering 59–72 (LSEEEEEEEVWDAE) has biased composition (acidic residues). A disordered region spans residues 59-107 (LSEEEEEEEVWDAEPMEHLSESESLESDSKQDAGSEQDAGSEPNTRSEQ). The span at 73 to 91 (PMEHLSESESLESDSKQDA) shows a compositional bias: basic and acidic residues. Residues 139–186 (QWVVFSISVPTELLPQEAVPLDLGPEDVEWTQALPWRLDVLFPCSHRL) form an important for interaction with piRNA region.

As to quaternary structure, interacts with UBR2; does not lead to Tex19.1 degradation and stabilizes it. Interacts with piRNA-associated proteins DDX4, EDC4, MAEL, PIWIL1, PIWIL2, RANBP9 and TDRD6. Interacts with L1RE1.

It is found in the cytoplasm. Functionally, required during spermatogenesis and placenta development, participating in the repression of retrotransposable elements and prevent their mobilization. Collaborates with the Piwi-interacting RNA (piRNA) pathway, which mediates the repression of transposable elements during meiosis by forming complexes composed of piRNAs and Piwi proteins. Interacts with Piwi proteins and directly binds piRNAs, a class of 24 to 30 nucleotide RNAs that are generated by a Dicer-independent mechanism and are primarily derived from transposons and other repeated sequence elements. Also during spermatogenesis, promotes, with UBR2, SPO11-dependent recombination foci to accumulate and drive robust homologous chromosome synapsis. Interacts with LINE-1 retrotransposon encoded LIRE1, stimulates LIRE1 polyubiquitination, mediated by UBR2, and degradation, inhibiting LINE-1 retrotransposon mobilization. This chain is Testis-expressed protein 19.1 (Tex19.1), found in Rattus norvegicus (Rat).